The primary structure comprises 175 residues: Ribosome maturation factor RimM (175 aa).

The PRC barrel domain maps to 99-171; sequence AGEYYWFQLK…RILFDLPDGL (73 aa).

It belongs to the RimM family. As to quaternary structure, binds ribosomal protein uS19.

The protein resides in the cytoplasm. Its function is as follows. An accessory protein needed during the final step in the assembly of 30S ribosomal subunit, possibly for assembly of the head region. Essential for efficient processing of 16S rRNA. May be needed both before and after RbfA during the maturation of 16S rRNA. It has affinity for free ribosomal 30S subunits but not for 70S ribosomes. In Syntrophotalea carbinolica (strain DSM 2380 / NBRC 103641 / GraBd1) (Pelobacter carbinolicus), this protein is Ribosome maturation factor RimM.